Consider the following 422-residue polypeptide: Tryptophan synthase beta chain 1 (422 aa).

The residue at position 107 (Lys-107) is an N6-(pyridoxal phosphate)lysine.

It belongs to the TrpB family. In terms of assembly, tetramer of two alpha and two beta chains. Requires pyridoxal 5'-phosphate as cofactor.

It carries out the reaction (1S,2R)-1-C-(indol-3-yl)glycerol 3-phosphate + L-serine = D-glyceraldehyde 3-phosphate + L-tryptophan + H2O. The protein operates within amino-acid biosynthesis; L-tryptophan biosynthesis; L-tryptophan from chorismate: step 5/5. Functionally, the beta subunit is responsible for the synthesis of L-tryptophan from indole and L-serine. The polypeptide is Tryptophan synthase beta chain 1 (trpB1) (Sulfurisphaera tokodaii (strain DSM 16993 / JCM 10545 / NBRC 100140 / 7) (Sulfolobus tokodaii)).